The sequence spans 126 residues: NADH-quinone oxidoreductase subunit A (126 aa).

Transmembrane regions (helical) follow at residues 14–34 (FLYFIFFSLFFCCFMLFTSWF), 66–86 (FYLIAIFFVIFDVEALYLYAW), and 96–116 (IGFVEATIFILFLLLSLFYLV).

Belongs to the complex I subunit 3 family. NDH-1 is composed of 13 different subunits. Subunits NuoA, H, J, K, L, M, N constitute the membrane sector of the complex.

The protein localises to the cell membrane. The enzyme catalyses a quinone + NADH + 5 H(+)(in) = a quinol + NAD(+) + 4 H(+)(out). Its function is as follows. NDH-1 shuttles electrons from NADH, via FMN and iron-sulfur (Fe-S) centers, to quinones in the respiratory chain. The immediate electron acceptor for the enzyme in this species is believed to be ubiquinone. Couples the redox reaction to proton translocation (for every two electrons transferred, four hydrogen ions are translocated across the cytoplasmic membrane), and thus conserves the redox energy in a proton gradient. The chain is NADH-quinone oxidoreductase subunit A from Buchnera aphidicola subsp. Schizaphis graminum (strain Sg).